We begin with the raw amino-acid sequence, 118 residues long: MVINGLTIVLLSLAVFRLARLLVFDTIMAPLRSLFHEEKEEKDADGNIETYIVIKGTGVRAFIGELLSCYWCTGVWCAGFLILCQAVIPQAAQWLILLLAIAGLAGIIETLVSKWLQE.

3 helical membrane passes run 8 to 28 (IVLLSLAVFRLARLLVFDTIM), 62 to 82 (FIGELLSCYWCTGVWCAGFLI), and 92 to 112 (AQWLILLLAIAGLAGIIETLV).

This sequence belongs to the UPF0713 family.

It is found in the cell membrane. Functionally, involved in sporulation. In Bacillus subtilis (strain 168), this protein is Sporulation protein YjcA (yjcA).